The chain runs to 202 residues: Holliday junction branch migration complex subunit RuvA (202 aa).

Residues 1 to 64 (MIDFLKGRLV…ETALEMFGFS (64 aa)) form a domain I region. The tract at residues 65–143 (SELDRTAFLL…KQQVAVSAEL (79 aa)) is domain II. Positions 144-152 (PASDGVPVL) are flexible linker. The interval 152–202 (LAGRAENEALAALISLGYTPREAREALNRLPDRKLDAAGLVHAALRIMGSQ) is domain III.

Belongs to the RuvA family. Homotetramer. Forms an RuvA(8)-RuvB(12)-Holliday junction (HJ) complex. HJ DNA is sandwiched between 2 RuvA tetramers; dsDNA enters through RuvA and exits via RuvB. An RuvB hexamer assembles on each DNA strand where it exits the tetramer. Each RuvB hexamer is contacted by two RuvA subunits (via domain III) on 2 adjacent RuvB subunits; this complex drives branch migration. In the full resolvosome a probable DNA-RuvA(4)-RuvB(12)-RuvC(2) complex forms which resolves the HJ.

Its subcellular location is the cytoplasm. Functionally, the RuvA-RuvB-RuvC complex processes Holliday junction (HJ) DNA during genetic recombination and DNA repair, while the RuvA-RuvB complex plays an important role in the rescue of blocked DNA replication forks via replication fork reversal (RFR). RuvA specifically binds to HJ cruciform DNA, conferring on it an open structure. The RuvB hexamer acts as an ATP-dependent pump, pulling dsDNA into and through the RuvAB complex. HJ branch migration allows RuvC to scan DNA until it finds its consensus sequence, where it cleaves and resolves the cruciform DNA. In Desulforudis audaxviator (strain MP104C), this protein is Holliday junction branch migration complex subunit RuvA.